The sequence spans 422 residues: Serine hydroxymethyltransferase (422 aa).

Residues leucine 118 and 122–124 each bind (6S)-5,6,7,8-tetrahydrofolate; that span reads GHL. Lysine 227 is modified (N6-(pyridoxal phosphate)lysine). Residues glutamate 243 and 351-353 each bind (6S)-5,6,7,8-tetrahydrofolate; that span reads SPF.

The protein belongs to the SHMT family. In terms of assembly, homodimer. Pyridoxal 5'-phosphate serves as cofactor.

The protein resides in the cytoplasm. The enzyme catalyses (6R)-5,10-methylene-5,6,7,8-tetrahydrofolate + glycine + H2O = (6S)-5,6,7,8-tetrahydrofolate + L-serine. It participates in one-carbon metabolism; tetrahydrofolate interconversion. Its pathway is amino-acid biosynthesis; glycine biosynthesis; glycine from L-serine: step 1/1. Its function is as follows. Catalyzes the reversible interconversion of serine and glycine with tetrahydrofolate (THF) serving as the one-carbon carrier. This reaction serves as the major source of one-carbon groups required for the biosynthesis of purines, thymidylate, methionine, and other important biomolecules. Also exhibits THF-independent aldolase activity toward beta-hydroxyamino acids, producing glycine and aldehydes, via a retro-aldol mechanism. In Kosmotoga olearia (strain ATCC BAA-1733 / DSM 21960 / TBF 19.5.1), this protein is Serine hydroxymethyltransferase.